A 620-amino-acid chain; its full sequence is 1-deoxy-D-xylulose-5-phosphate synthase (620 aa).

Thiamine diphosphate-binding positions include His-80 and 121-123 (GHS). Asp-152 contributes to the Mg(2+) binding site. Thiamine diphosphate is bound by residues 153–154 (GA), Asn-181, Tyr-288, and Glu-370. Residue Asn-181 participates in Mg(2+) binding.

Belongs to the transketolase family. DXPS subfamily. Homodimer. It depends on Mg(2+) as a cofactor. The cofactor is thiamine diphosphate.

The enzyme catalyses D-glyceraldehyde 3-phosphate + pyruvate + H(+) = 1-deoxy-D-xylulose 5-phosphate + CO2. The protein operates within metabolic intermediate biosynthesis; 1-deoxy-D-xylulose 5-phosphate biosynthesis; 1-deoxy-D-xylulose 5-phosphate from D-glyceraldehyde 3-phosphate and pyruvate: step 1/1. In terms of biological role, catalyzes the acyloin condensation reaction between C atoms 2 and 3 of pyruvate and glyceraldehyde 3-phosphate to yield 1-deoxy-D-xylulose-5-phosphate (DXP). The chain is 1-deoxy-D-xylulose-5-phosphate synthase from Klebsiella pneumoniae (strain 342).